The following is a 435-amino-acid chain: Methionine aminopeptidase 2 (435 aa).

The interval 57 to 77 (AIDGDQAAAKKKKSKKKKKKA) is disordered. Basic residues predominate over residues 65–77 (AKKKKSKKKKKKA). Position 188 (histidine 188) interacts with substrate. A divalent metal cation-binding residues include aspartate 208, aspartate 219, and histidine 288. A substrate-binding site is contributed by histidine 296. A divalent metal cation-binding residues include glutamate 321 and glutamate 416.

The protein belongs to the peptidase M24A family. Methionine aminopeptidase eukaryotic type 2 subfamily. Requires Co(2+) as cofactor. Zn(2+) serves as cofactor. The cofactor is Mn(2+). It depends on Fe(2+) as a cofactor.

It is found in the cytoplasm. The enzyme catalyses Release of N-terminal amino acids, preferentially methionine, from peptides and arylamides.. In terms of biological role, cotranslationally removes the N-terminal methionine from nascent proteins. The N-terminal methionine is often cleaved when the second residue in the primary sequence is small and uncharged (Met-Ala-, Cys, Gly, Pro, Ser, Thr, or Val). The polypeptide is Methionine aminopeptidase 2 (Clavispora lusitaniae (strain ATCC 42720) (Yeast)).